We begin with the raw amino-acid sequence, 391 residues long: Phosphoglycerate kinase (391 aa).

Substrate-binding positions include 21–23 (DLN), Arg-36, 59–62 (HLGR), Arg-113, and Arg-146. ATP is bound by residues Lys-197, Glu-319, and 345-348 (GGDT).

It belongs to the phosphoglycerate kinase family. As to quaternary structure, monomer.

The protein localises to the cytoplasm. The catalysed reaction is (2R)-3-phosphoglycerate + ATP = (2R)-3-phospho-glyceroyl phosphate + ADP. Its pathway is carbohydrate degradation; glycolysis; pyruvate from D-glyceraldehyde 3-phosphate: step 2/5. This is Phosphoglycerate kinase from Shewanella sp. (strain W3-18-1).